The sequence spans 360 residues: UDP-N-acetylglucosamine--N-acetylmuramyl-(pentapeptide) pyrophosphoryl-undecaprenol N-acetylglucosamine transferase (360 aa).

Residues S198 and Q289 each coordinate UDP-N-acetyl-alpha-D-glucosamine.

This sequence belongs to the glycosyltransferase 28 family. MurG subfamily.

Its subcellular location is the cell membrane. The catalysed reaction is Mur2Ac(oyl-L-Ala-gamma-D-Glu-L-Lys-D-Ala-D-Ala)-di-trans,octa-cis-undecaprenyl diphosphate + UDP-N-acetyl-alpha-D-glucosamine = beta-D-GlcNAc-(1-&gt;4)-Mur2Ac(oyl-L-Ala-gamma-D-Glu-L-Lys-D-Ala-D-Ala)-di-trans,octa-cis-undecaprenyl diphosphate + UDP + H(+). Its pathway is cell wall biogenesis; peptidoglycan biosynthesis. Functionally, cell wall formation. Catalyzes the transfer of a GlcNAc subunit on undecaprenyl-pyrophosphoryl-MurNAc-pentapeptide (lipid intermediate I) to form undecaprenyl-pyrophosphoryl-MurNAc-(pentapeptide)GlcNAc (lipid intermediate II). In Streptococcus pyogenes serotype M12 (strain MGAS2096), this protein is UDP-N-acetylglucosamine--N-acetylmuramyl-(pentapeptide) pyrophosphoryl-undecaprenol N-acetylglucosamine transferase.